The primary structure comprises 231 residues: Phosphoheptose isomerase (231 aa).

An SIS domain is found at 35 to 190; the sequence is LAAVLGGGGR…CAAFDAALER (156 aa). A substrate-binding site is contributed by 50-52; the sequence is NGG. Positions 59 and 63 each coordinate Zn(2+). Substrate is bound by residues E63, 92 to 93, 118 to 120, S123, and Q170; these read ND and STS. The Zn(2+) site is built by Q170 and H178. Composition is skewed to low complexity over residues 197-206 and 214-225; these read AAGSAASTGR and ASTGRAAGAGRA. The tract at residues 197 to 231 is disordered; sequence AAGSAASTGRAARRERAASTGRAAGAGRAAQRKRR.

It belongs to the SIS family. GmhA subfamily. Zn(2+) is required as a cofactor.

It localises to the cytoplasm. It carries out the reaction 2 D-sedoheptulose 7-phosphate = D-glycero-alpha-D-manno-heptose 7-phosphate + D-glycero-beta-D-manno-heptose 7-phosphate. It participates in carbohydrate biosynthesis; D-glycero-D-manno-heptose 7-phosphate biosynthesis; D-glycero-alpha-D-manno-heptose 7-phosphate and D-glycero-beta-D-manno-heptose 7-phosphate from sedoheptulose 7-phosphate: step 1/1. In terms of biological role, catalyzes the isomerization of sedoheptulose 7-phosphate in D-glycero-D-manno-heptose 7-phosphate. The chain is Phosphoheptose isomerase from Streptomyces coelicolor (strain ATCC BAA-471 / A3(2) / M145).